We begin with the raw amino-acid sequence, 341 residues long: RNA 3'-terminal phosphate cyclase (341 aa).

ATP-binding positions include Gln102 and 283-287; that span reads HLADQ. His308 functions as the Tele-AMP-histidine intermediate in the catalytic mechanism.

This sequence belongs to the RNA 3'-terminal cyclase family. Type 1 subfamily.

It is found in the cytoplasm. The catalysed reaction is a 3'-end 3'-phospho-ribonucleotide-RNA + ATP = a 3'-end 2',3'-cyclophospho-ribonucleotide-RNA + AMP + diphosphate. Catalyzes the conversion of 3'-phosphate to a 2',3'-cyclic phosphodiester at the end of RNA. The mechanism of action of the enzyme occurs in 3 steps: (A) adenylation of the enzyme by ATP; (B) transfer of adenylate to an RNA-N3'P to produce RNA-N3'PP5'A; (C) and attack of the adjacent 2'-hydroxyl on the 3'-phosphorus in the diester linkage to produce the cyclic end product. The biological role of this enzyme is unknown but it is likely to function in some aspects of cellular RNA processing. This chain is RNA 3'-terminal phosphate cyclase, found in Ectopseudomonas mendocina (strain ymp) (Pseudomonas mendocina).